The following is a 398-amino-acid chain: Dihydrolipoyllysine-residue acetyltransferase component of acetoin cleaving system (398 aa).

Positions 2-77 (AVKVVMPKLG…PPGTAICYIG (76 aa)) constitute a Lipoyl-binding domain. Lysine 43 is modified (N6-lipoyllysine). A Peripheral subunit-binding (PSBD) domain is found at 118–155 (KISPVARKIAEKAGLDLKQLKGTGPGGRIVKDDVTKAL). Residues histidine 371 and aspartate 375 contribute to the active site.

This sequence belongs to the 2-oxoacid dehydrogenase family. The cofactor is (R)-lipoate.

It carries out the reaction N(6)-[(R)-dihydrolipoyl]-L-lysyl-[protein] + acetyl-CoA = N(6)-[(R)-S(8)-acetyldihydrolipoyl]-L-lysyl-[protein] + CoA. Its pathway is ketone degradation; acetoin degradation. In Bacillus subtilis (strain 168), this protein is Dihydrolipoyllysine-residue acetyltransferase component of acetoin cleaving system (acoC).